A 639-amino-acid chain; its full sequence is Chaperone protein DnaK (639 aa).

Thr198 carries the post-translational modification Phosphothreonine; by autocatalysis. Residues 603–618 (AKAQTQGGAQEGAAKQ) show a composition bias toward low complexity. The tract at residues 603 to 639 (AKAQTQGGAQEGAAKQSNATADDVVDAEFEEVKDDKK) is disordered. Over residues 625–639 (DVVDAEFEEVKDDKK) the composition is skewed to acidic residues.

The protein belongs to the heat shock protein 70 family.

Functionally, acts as a chaperone. The chain is Chaperone protein DnaK from Shewanella sp. (strain MR-7).